The chain runs to 333 residues: Anthranilate phosphoribosyltransferase (333 aa).

5-phospho-alpha-D-ribose 1-diphosphate is bound by residues Gly81, 84 to 85 (GD), Thr89, 91 to 94 (NIST), 109 to 117 (KHGNRSVSS), and Ala121. Gly81 lines the anthranilate pocket. Ser93 contributes to the Mg(2+) binding site. Asn112 serves as a coordination point for anthranilate. Residue Arg167 participates in anthranilate binding. Mg(2+)-binding residues include Asp225 and Glu226.

The protein belongs to the anthranilate phosphoribosyltransferase family. In terms of assembly, homodimer. Mg(2+) serves as cofactor.

It catalyses the reaction N-(5-phospho-beta-D-ribosyl)anthranilate + diphosphate = 5-phospho-alpha-D-ribose 1-diphosphate + anthranilate. The protein operates within amino-acid biosynthesis; L-tryptophan biosynthesis; L-tryptophan from chorismate: step 2/5. Functionally, catalyzes the transfer of the phosphoribosyl group of 5-phosphorylribose-1-pyrophosphate (PRPP) to anthranilate to yield N-(5'-phosphoribosyl)-anthranilate (PRA). The protein is Anthranilate phosphoribosyltransferase of Haemophilus influenzae (strain PittGG).